The sequence spans 545 residues: GPI transamidase component PIG-T homolog (545 aa).

An N-terminal signal peptide occupies residues Met-1–Ala-22. Residues Thr-23 to Asn-493 lie on the Lumenal side of the membrane. 5 N-linked (GlcNAc...) asparagine glycosylation sites follow: Asn-168, Asn-227, Asn-336, Asn-391, and Asn-467. The helical transmembrane segment at Val-494–Thr-514 threads the bilayer. At Arg-515–Gly-545 the chain is on the cytoplasmic side.

The protein belongs to the PIGT family. In terms of assembly, forms a complex with PIG-S homolog, PIG-U homolog and GPI8. The disulfide bond between PIGK/GPI8 and PIGT is important for normal enzyme activity.

Its subcellular location is the endoplasmic reticulum membrane. It participates in glycolipid biosynthesis; glycosylphosphatidylinositol-anchor biosynthesis. In terms of biological role, component of the GPI transamidase complex. Involved in transfer of GPI to proteins. This is GPI transamidase component PIG-T homolog (gpi16) from Schizosaccharomyces pombe (strain 972 / ATCC 24843) (Fission yeast).